Reading from the N-terminus, the 829-residue chain is MTAKFDVDHVLNSISEDDKIALLSGTDFWHTYSIPEHNVPPIRTTDGPNGVRGTKFFAGVPAACLPCGTALGATWDRDLLHKAGVLLGQECLAKGAHCWLGPTINMQRSPLGGRGFESFAEDPHLSGTMAKSIILGCESTGVISAVKHYVGNDQEHERRAVDVMVTPRALREIYLRPFQIVARDAHSGALMTSYNKINGKHVVENPAMYDIIRKEWKWDPLIMSDWLGTYTTIDSLNAGLDLEMPGPSRYRGKYIESAVQARLVKQSTIDQRARKVLEFAARASQAPASAVESGRDYPEDRALNREICGNSIVLLKNEDTLLPLPKKIKKIALIGSHVKTPAISGGGSASLQPYYAVSLYDAIIEVLPDTEIIYETGAYAHKMLPVIDRMLSNAVIRFYNEPADKERTLLSTEPVNNTAFQLMDYNTPGLNRTLFWATLDGEFTPDVSGLWDFGLTVFGTATLYIDDEMVIDNTTQQTRGTAFFGKGTIQEVGAKELTAGRTYKIRIEFGSANTSPIKAIGVVHFGGGAAHLGAFLHMDPEQMVRDAVKAASEADYTILCTGLNRDWESEGFDRPDMDLPPRIDALISAVLDVAGDKTIIVNQSGTPVMMPWSDRARAIIQAWYGGNETGHGIADVLFGDVNPCAKLPLSWPADVRHNPAYLNSLSVGGRMLYGEDIYVGYRFYEKIGQVTLFPFGHGLSYTLFEVSPKVTVSPTAFTVETPLSATVRIKNTGPVAGAQILQLYVAAPTSATPRPVKELQGFSKVFLQSGEEKTVVISVDKYATSFWDGIEDMWKSEAGVYQVLIGTSSQDIVARGEFTVDETTFWTGV.

The active site involves Asp-225. A PA14 domain is found at 389–548 (RMLSNAVIRF…DPEQMVRDAV (160 aa)). N-linked (GlcNAc...) asparagine glycosylation is found at Asn-416, Asn-431, Asn-473, Asn-602, and Asn-627.

The protein belongs to the glycosyl hydrolase 3 family.

It localises to the secreted. It carries out the reaction Hydrolysis of terminal, non-reducing beta-D-glucosyl residues with release of beta-D-glucose.. It functions in the pathway glycan metabolism; cellulose degradation. Beta-glucosidases are one of a number of cellulolytic enzymes involved in the degradation of cellulosic biomass. Catalyzes the last step releasing glucose from the inhibitory cellobiose. This Aspergillus clavatus (strain ATCC 1007 / CBS 513.65 / DSM 816 / NCTC 3887 / NRRL 1 / QM 1276 / 107) protein is Probable beta-glucosidase H (bglH).